The chain runs to 635 residues: PTS system fructose-specific EIIABC component (635 aa).

One can recognise a PTS EIIA type-2 domain in the interval 5–149 (ELLTKHTIKL…DAIIDIINQH (145 aa)). The Tele-phosphohistidine intermediate; for EIIA activity role is filled by H67. H67 is subject to Phosphohistidine; by HPr. A disordered region spans residues 149-168 (HDKDDDEEEEEEEAAPAPAG). Residues 152–162 (DDDEEEEEEEA) are compositionally biased toward acidic residues. Residues 172-267 (ILAVTACPTG…PQELIEKAMN (96 aa)) enclose the PTS EIIB type-2 domain. The Phosphocysteine intermediate; for EIIB activity role is filled by C178. C178 carries the phosphocysteine; by EIIA modification. Residues 273–293 (YQGSGGGSAASNDDEEAKGKS) form a disordered region. In terms of domain architecture, PTS EIIC type-2 spans 301–635 (FYKHLMSGVS…GIVKKPVTEK (335 aa)). The next 9 membrane-spanning stretches (helical) occupy residues 312–332 (MLPFVVGGGILVAISFFWGIH), 350–370 (FIGGDNALKLIVAVLAGFIAM), 392–412 (NAGFLGGLIAGFLAGYVVILL), 428–448 (PVLIYPLFGIFITGVLMQFVV), 470–490 (NLVLMGIILGGMMAIDMGGPL), 511–531 (AAIMAGGMVPPLGIALATTIF), 544–564 (ITCYFMGAAFVTEGAIPFAAA), 569–589 (VIPAAVVGAAVAGGLTEFFRV), and 608–628 (MLYLLSIVIGAVVMAIILGIV).

It is found in the cell membrane. It carries out the reaction D-fructose(out) + N(pros)-phospho-L-histidyl-[protein] = D-fructose 1-phosphate(in) + L-histidyl-[protein]. Functionally, the phosphoenolpyruvate-dependent sugar phosphotransferase system (sugar PTS), a major carbohydrate active transport system, catalyzes the phosphorylation of incoming sugar substrates concomitantly with their translocation across the cell membrane. This system is involved in fructose transport. The protein is PTS system fructose-specific EIIABC component (fruA) of Bacillus subtilis (strain 168).